The sequence spans 148 residues: 15 kDa excretory/secretory protein (148 aa).

The signal sequence occupies residues 1–19 (MFFAFAVLLIALATREAYG).

It to T.colubriformis 30 kDa antigenic glycoprotein.

It localises to the secreted. The protein is 15 kDa excretory/secretory protein of Haemonchus contortus (Barber pole worm).